Reading from the N-terminus, the 259-residue chain is Thiazole synthase (259 aa).

The Schiff-base intermediate with DXP role is filled by lysine 99. 1-deoxy-D-xylulose 5-phosphate is bound by residues glycine 161, 187-188 (AG), and 209-219 (NSAIACAQNPI).

The protein belongs to the ThiG family. As to quaternary structure, homotetramer. Forms heterodimers with either ThiH or ThiS.

The protein resides in the cytoplasm. The enzyme catalyses [ThiS sulfur-carrier protein]-C-terminal-Gly-aminoethanethioate + 2-iminoacetate + 1-deoxy-D-xylulose 5-phosphate = [ThiS sulfur-carrier protein]-C-terminal Gly-Gly + 2-[(2R,5Z)-2-carboxy-4-methylthiazol-5(2H)-ylidene]ethyl phosphate + 2 H2O + H(+). It participates in cofactor biosynthesis; thiamine diphosphate biosynthesis. Functionally, catalyzes the rearrangement of 1-deoxy-D-xylulose 5-phosphate (DXP) to produce the thiazole phosphate moiety of thiamine. Sulfur is provided by the thiocarboxylate moiety of the carrier protein ThiS. In vitro, sulfur can be provided by H(2)S. This is Thiazole synthase from Aliarcobacter butzleri (strain RM4018) (Arcobacter butzleri).